A 271-amino-acid polypeptide reads, in one-letter code: Glutamate racemase (271 aa).

Residues 12 to 13 (DS) and 44 to 45 (YG) each bind substrate. The active-site Proton donor/acceptor is the C75. 76–77 (NT) is a substrate binding site. The active-site Proton donor/acceptor is the C185. 186–187 (TH) contacts substrate.

It belongs to the aspartate/glutamate racemases family.

It catalyses the reaction L-glutamate = D-glutamate. It participates in cell wall biogenesis; peptidoglycan biosynthesis. Its function is as follows. Provides the (R)-glutamate required for cell wall biosynthesis. The polypeptide is Glutamate racemase (Mycobacterium marinum (strain ATCC BAA-535 / M)).